The primary structure comprises 285 residues: 2-dehydro-3-deoxyphosphooctonate aldolase (285 aa).

It belongs to the KdsA family.

Its subcellular location is the cytoplasm. It carries out the reaction D-arabinose 5-phosphate + phosphoenolpyruvate + H2O = 3-deoxy-alpha-D-manno-2-octulosonate-8-phosphate + phosphate. It functions in the pathway carbohydrate biosynthesis; 3-deoxy-D-manno-octulosonate biosynthesis; 3-deoxy-D-manno-octulosonate from D-ribulose 5-phosphate: step 2/3. Its pathway is bacterial outer membrane biogenesis; lipopolysaccharide biosynthesis. In Acinetobacter baumannii (strain SDF), this protein is 2-dehydro-3-deoxyphosphooctonate aldolase.